A 588-amino-acid polypeptide reads, in one-letter code: Snake venom 5'-nucleotidase (588 aa).

The first 40 residues, 1 to 40 (MQTPKRRRGAQGCPRSSPSPPLLLLVRAVWFCAALSVAAG), serve as a signal peptide directing secretion. The Zn(2+) site is built by Asp-51 and His-53. An intrachain disulfide couples Cys-66 to Cys-71. Zn(2+) contacts are provided by Asp-99 and Asn-131. The N-linked (GlcNAc...) asparagine glycan is linked to Asn-167. The Zn(2+) site is built by His-234 and His-257. Residues Asn-347 and Asn-361 are each glycosylated (N-linked (GlcNAc...) asparagine). Intrachain disulfides connect Cys-367/Cys-372 and Cys-379/Cys-401. Arg-368 contributes to the AMP binding site. 2 residues coordinate AMP: Asn-404 and Arg-409. The N-linked (GlcNAc...) asparagine glycan is linked to Asn-418. Phe-432 lines the AMP pocket. A disulfide bridge connects residues Cys-491 and Cys-494. AMP is bound by residues Phe-515 and Asp-521. N-linked (GlcNAc...) asparagine glycosylation is present at Asn-532. Ser-564 carries GPI-anchor amidated serine lipidation. Positions 565–588 (AGTLFQAQLFLTWGLCVSLLYFIL) are cleaved as a propeptide — removed in mature form.

This sequence belongs to the 5'-nucleotidase family. Requires Zn(2+) as cofactor. Post-translationally, venom 5'-nucleotidases (or a part thereof) may be released into the venom via exosome-like vesicles. They may be attached via a GPI anchor to the membrane of these vesicles. Soluble forms of 5'-nucleotidase might be released by cleavage of the ectodomain in the exosome-like vesicles or venom gland cells. Expressed by the venom gland.

Its subcellular location is the membrane. The enzyme catalyses a ribonucleoside 5'-phosphate + H2O = a ribonucleoside + phosphate. Its function is as follows. Hydrolyzes nucleotides into nucleosides. Snake venom 5'-nucleotidases are widely distributed among venomous snake taxa, but there is a lack of information about their biological activities. They have been shown to inhibit platelet aggregation. This effect may be due to the liberation of inhibitory AMP or adenosine by its action on ADP released upon initiation of aggregation. Venom 5'-nucleotidases are also known to synergistically act in vivo with other toxins like ADPases, phospholipases, and disintegrins to exert a more pronounced anti-coagulant effect. The chain is Snake venom 5'-nucleotidase from Crotalus adamanteus (Eastern diamondback rattlesnake).